Consider the following 178-residue polypeptide: Large ribosomal subunit protein uL6 (178 aa).

This sequence belongs to the universal ribosomal protein uL6 family. As to quaternary structure, part of the 50S ribosomal subunit.

This protein binds to the 23S rRNA, and is important in its secondary structure. It is located near the subunit interface in the base of the L7/L12 stalk, and near the tRNA binding site of the peptidyltransferase center. The polypeptide is Large ribosomal subunit protein uL6 (Campylobacter lari (strain RM2100 / D67 / ATCC BAA-1060)).